The chain runs to 283 residues: ATP synthase gamma chain (283 aa).

Belongs to the ATPase gamma chain family. In terms of assembly, F-type ATPases have 2 components, CF(1) - the catalytic core - and CF(0) - the membrane proton channel. CF(1) has five subunits: alpha(3), beta(3), gamma(1), delta(1), epsilon(1). CF(0) has three main subunits: a, b and c.

Its subcellular location is the cell membrane. Produces ATP from ADP in the presence of a proton gradient across the membrane. The gamma chain is believed to be important in regulating ATPase activity and the flow of protons through the CF(0) complex. This chain is ATP synthase gamma chain, found in Clostridium botulinum (strain Eklund 17B / Type B).